Here is a 269-residue protein sequence, read N- to C-terminus: Protein TORNADO 2 (269 aa).

The Cytoplasmic portion of the chain corresponds to 1-10 (MPLSNNVIGC). Residues 11-31 (INFITVLLSIPVIGAGIWLAI) form a helical membrane-spanning segment. Residues 32-44 (GTVNSCVKLLQWP) lie on the Extracellular side of the membrane. Residues 45-65 (VIILGVLILLVGLAGFIGGFW) form a helical membrane-spanning segment. Residues 66–71 (RITWLL) are Cytoplasmic-facing. A helical transmembrane segment spans residues 72–92 (VVYLIAMLILIVLLGCLVGFI). At 93–231 (YMVTIRGSGH…NIKVDWLKAD (139 aa)) the chain is on the extracellular side. N-linked (GlcNAc...) asparagine glycosylation occurs at Asn-200. A helical membrane pass occupies residues 232–252 (IFLLLALIGLIIVYIIGCCAF). Topologically, residues 253-269 (RNAETEDIFRKYKQGYT) are cytoplasmic.

This sequence belongs to the tetraspanin (TM4SF) family. In terms of tissue distribution, expressed in seedlings, roots, leaves, stems, apex, siliques and flowers. Present in ovules, prominently in nucellus and integuments.

It localises to the membrane. Functionally, involved in the basipetal transport of auxin (IAA) that modulates growth and organs organization, as well as cell differentiation. Regulates shoot apical meristem (SAM) organization in the peripheral zone. Required for initial meristematic divisions in the epidermal/lateral root cap leading to the formation of epidermal cells and a clone of lateral root cap cells, as well as for the maintenance of the radial pattern of cell specification in the root, thus regulating the distinction between the lateral root cap and epidermis. Together with WIH peptides, promotes megasporogenesis. In Arabidopsis thaliana (Mouse-ear cress), this protein is Protein TORNADO 2 (TRN2).